Consider the following 421-residue polypeptide: Osmoprotective compounds-binding protein GgtB (421 aa).

A signal peptide spans 1–18 (MKFFKITTLIISLIVLTS). Cysteine 19 carries the N-palmitoyl cysteine lipid modification. A lipid anchor (S-diacylglycerol cysteine) is attached at cysteine 19.

It belongs to the bacterial solute-binding protein 1 family. The complex is composed of two ATP-binding proteins (GgtA), two transmembrane proteins (GgtC and GgtD) and a solute-binding protein (GgtB).

It is found in the cell membrane. Its function is as follows. Part of the ABC transporter complex GgtABCD involved in the uptake of the osmoprotective compounds glucosylglycerol (GG), sucrose and trehalose. Binds glucosylglycerol and exhibits a somewhat lower affinity towards sucrose and a substantially lower affinity towards trehalose. The protein is Osmoprotective compounds-binding protein GgtB of Synechocystis sp. (strain ATCC 27184 / PCC 6803 / Kazusa).